Consider the following 214-residue polypeptide: Endosomal/vacuolar adapter protein YPT35 (214 aa).

Residues 1–63 form a disordered region; sequence MNDKISFLPP…ATITRTRPRR (63 aa). A PxP motif is present at residues 5–15; the sequence is ISFLPPEPIQL. The segment covering 16 to 31 has biased composition (acidic residues); the sequence is LDEDSTEPELDIDSQQ. Over residues 38–58 the composition is skewed to low complexity; it reads SASNSNDSTSHSNDCGATITR. Serine 65 and serine 66 each carry phosphoserine. The PX domain maps to 73–213; that stretch reads FQKAHVSDCT…IQFLEPSKRV (141 aa).

The protein belongs to the YPT35 family. As to quaternary structure, interacts with RBD2, YIF1, YIP1 and YIP4.

It is found in the endosome membrane. Its subcellular location is the vacuole membrane. Recruits the lipid transfer protein VPS13 to endosomal and vacuolar membranes. The protein is Endosomal/vacuolar adapter protein YPT35 (YPT35) of Saccharomyces cerevisiae (strain YJM789) (Baker's yeast).